A 219-amino-acid polypeptide reads, in one-letter code: uncharacterized protein (219 aa).

This sequence belongs to the CIA30 family.

It localises to the cytoplasm. The protein resides in the nucleus. This is an uncharacterized protein from Schizosaccharomyces pombe (strain 972 / ATCC 24843) (Fission yeast).